Reading from the N-terminus, the 109-residue chain is Tetracenomycin F2 cyclase (109 aa).

In terms of assembly, homodimer.

It catalyses the reaction tetracenomycin F2 + H(+) = tetracenomycin F1 + H2O. The protein operates within antibiotic biosynthesis; tetracenomycin C biosynthesis. Catalyzing the conversion of tetracenomycin F2 to tetracenomycin F1. This Streptomyces glaucescens protein is Tetracenomycin F2 cyclase (tcmI).